Consider the following 346-residue polypeptide: Biotin synthase (346 aa).

The 219-residue stretch at 38-256 folds into the Radical SAM core domain; it reads RQVQVSTLLS…IAVARIMMPT (219 aa). 3 residues coordinate [4Fe-4S] cluster: cysteine 53, cysteine 57, and cysteine 60. [2Fe-2S] cluster contacts are provided by cysteine 97, cysteine 128, cysteine 188, and arginine 260.

It belongs to the radical SAM superfamily. Biotin synthase family. In terms of assembly, homodimer. [4Fe-4S] cluster is required as a cofactor. It depends on [2Fe-2S] cluster as a cofactor.

It carries out the reaction (4R,5S)-dethiobiotin + (sulfur carrier)-SH + 2 reduced [2Fe-2S]-[ferredoxin] + 2 S-adenosyl-L-methionine = (sulfur carrier)-H + biotin + 2 5'-deoxyadenosine + 2 L-methionine + 2 oxidized [2Fe-2S]-[ferredoxin]. Its pathway is cofactor biosynthesis; biotin biosynthesis; biotin from 7,8-diaminononanoate: step 2/2. Functionally, catalyzes the conversion of dethiobiotin (DTB) to biotin by the insertion of a sulfur atom into dethiobiotin via a radical-based mechanism. The sequence is that of Biotin synthase from Cronobacter sakazakii (strain ATCC BAA-894) (Enterobacter sakazakii).